The primary structure comprises 1176 residues: 3-hydroxy-3-methylglutaryl-coenzyme A reductase (1176 aa).

The Cytoplasmic segment spans residues 1–34 (MSLPNHSGSSAFKSFSYIVGTGIKRAAKLSTRNP). A helical transmembrane segment spans residues 35-55 (IEMIVVVLILSSFSYFYLFNL). At 56-299 (ARTSDIFSGT…VKELIDLADN (244 aa)) the chain is on the lumenal side. Asn-224 and Asn-238 each carry an N-linked (GlcNAc...) asparagine glycan. Residues 300 to 320 (IDIIVILVGYIMMIATFISLY) traverse the membrane as a helical segment. An SSD domain is found at 301-465 (DIIVILVGYI…FTWYTAVLAL (165 aa)). Residues 321-330 (VNMRAMGSRY) lie on the Cytoplasmic side of the membrane. The chain crosses the membrane as a helical span at residues 331-351 (TLATAVVFNGFFSFMLALLTV). The Lumenal portion of the chain corresponds to 352–355 (RALG). Residues 356-376 (VDVYPVVLAEAIPFLAVTIGF) traverse the membrane as a helical segment. The Cytoplasmic portion of the chain corresponds to 377 to 422 (ERPFKLTKRVFQFSKETPLTKQEIRTTIMRAVDTVALPIARDCFME). The chain crosses the membrane as a helical span at residues 423-443 (IIVLVLGAKSGISGLEEFCLL). Position 444 (Ser-444) is a topological domain, lumenal. The helical transmembrane segment at 445–465 (AILLAYDFIIMFTWYTAVLAL) threads the bilayer. Topologically, residues 466-524 (KLELLRIREINGISADDIKKGTKKSTGYIRRTVIKAFSDDHAAGANTANQKADGPIIGR) are cytoplasmic. A helical membrane pass occupies residues 525–545 (VKLLMIVGFVVMHIFKFCSAF). Topologically, residues 546-622 (QSVGPQVNIT…DTYAVYIQHP (77 aa)) are lumenal. Asn-553 and Asn-596 each carry an N-linked (GlcNAc...) asparagine glycan. A helical membrane pass occupies residues 623 to 643 (VISKWLTIALFVSLFLNTYLF). At 644-1176 (NVAKQPKQIV…GTEPGTCIKS (533 aa)) the chain is on the cytoplasmic side. A disordered region spans residues 699–724 (PNHKRSHNHHHSHSHSHNHHSNHHQS). The span at 700–721 (NHKRSHNHHHSHSHSHNHHSNH) shows a compositional bias: basic residues. Residue Glu-841 is the Charge relay system of the active site. CoA is bound at residue 847–853 (STARGCK). NADP(+) contacts are provided by residues 907–909 (SRF) and 934–942 (DAMGMNMIS). The active-site Charge relay system is the Lys-972. CoA is bound at residue 1001 to 1003 (VLK). The active-site Charge relay system is the Asp-1048. Residue 1145–1146 (AH) coordinates CoA. His-1146 (proton donor) is an active-site residue. Residue 1150–1151 (NR) participates in NADP(+) binding. The interval 1153–1176 (TQAPTITSGPAPSTGTEPGTCIKS) is disordered.

Belongs to the HMG-CoA reductase family.

It localises to the endoplasmic reticulum membrane. The enzyme catalyses (R)-mevalonate + 2 NADP(+) + CoA = (3S)-3-hydroxy-3-methylglutaryl-CoA + 2 NADPH + 2 H(+). The protein operates within metabolic intermediate biosynthesis; (R)-mevalonate biosynthesis; (R)-mevalonate from acetyl-CoA: step 3/3. In terms of biological role, HMG-CoA reductase; part of the first module of ergosterol biosynthesis pathway that includes the early steps of the pathway, conserved across all eukaryotes, and which results in the formation of mevalonate from acetyl-coenzyme A (acetyl-CoA). In this module, the cytosolic acetyl-CoA acetyltransferase catalyzes the formation of acetoacetyl-CoA. The hydroxymethylglutaryl-CoA synthase then condenses acetyl-CoA with acetoacetyl-CoA to form HMG-CoA. The rate-limiting step of the early module is the reduction to mevalonate by the 3-hydroxy-3-methylglutaryl-coenzyme A (HMG-CoA) reductase hmgA. This Phycomyces blakesleeanus (strain ATCC 8743b / DSM 1359 / FGSC 10004 / NBRC 33097 / NRRL 1555) protein is 3-hydroxy-3-methylglutaryl-coenzyme A reductase.